The following is a 717-amino-acid chain: uncharacterized protein (717 aa).

The helical transmembrane segment at 19-38 (VFLSTIFVSIIFCLGILFLV) threads the bilayer.

To E.coli YtfN.

It localises to the membrane. This is an uncharacterized protein from Buchnera aphidicola subsp. Baizongia pistaciae (strain Bp).